Here is a 519-residue protein sequence, read N- to C-terminus: 3-octaprenyl-4-hydroxybenzoate carboxy-lyase (519 aa).

Position 177 (asparagine 177) interacts with Mn(2+). Prenylated FMN-binding positions include 180–182 (IYR), 194–196 (RWL), and 199–200 (RG). Position 243 (glutamate 243) interacts with Mn(2+). Aspartate 318 (proton donor) is an active-site residue.

The protein belongs to the UbiD family. In terms of assembly, homohexamer. The cofactor is prenylated FMN. Requires Mn(2+) as cofactor.

It localises to the cell membrane. The enzyme catalyses a 4-hydroxy-3-(all-trans-polyprenyl)benzoate + H(+) = a 2-(all-trans-polyprenyl)phenol + CO2. It participates in cofactor biosynthesis; ubiquinone biosynthesis. Catalyzes the decarboxylation of 3-octaprenyl-4-hydroxy benzoate to 2-octaprenylphenol, an intermediate step in ubiquinone biosynthesis. In Burkholderia thailandensis (strain ATCC 700388 / DSM 13276 / CCUG 48851 / CIP 106301 / E264), this protein is 3-octaprenyl-4-hydroxybenzoate carboxy-lyase.